A 364-amino-acid chain; its full sequence is Ferrochelatase (364 aa).

Fe cation is bound by residues His-213 and Glu-294.

The protein belongs to the ferrochelatase family.

The protein resides in the cytoplasm. The enzyme catalyses heme b + 2 H(+) = protoporphyrin IX + Fe(2+). The protein operates within porphyrin-containing compound metabolism; protoheme biosynthesis; protoheme from protoporphyrin-IX: step 1/1. Its function is as follows. Catalyzes the ferrous insertion into protoporphyrin IX. The protein is Ferrochelatase of Chromobacterium violaceum (strain ATCC 12472 / DSM 30191 / JCM 1249 / CCUG 213 / NBRC 12614 / NCIMB 9131 / NCTC 9757 / MK).